Consider the following 27-residue polypeptide: QKLCERPSGTXSGVCGNNNACKNQCIR.

Glutamine 1 is modified (pyrrolidone carboxylic acid).

It belongs to the DEFL family. Forms oligomers in its native state.

In terms of biological role, possesses some antifungal activity sensitive to inorganic cations and antibacterial activity against B.megaterium. This chain is Defensin-like protein 2, found in Brassica campestris (Field mustard).